The following is a 914-amino-acid chain: Effector protein hopAE1 (914 aa).

Polar residues predominate over residues 1 to 13 (MMPSQITRSSHSS). Positions 1-31 (MMPSQITRSSHSSLPEVAPASGDAAGVSEQT) are disordered.

The protein belongs to the HopW family.

The protein localises to the secreted. This is Effector protein hopAE1 (hopAE1) from Pseudomonas syringae pv. syringae (strain B728a).